The chain runs to 432 residues: Mitochondrial distribution and morphology protein 12 (432 aa).

An SMP-LTD domain is found at 1-432 (MSIEVDWRAA…VFPSFWTFLI (432 aa)). Disordered regions lie at residues 182–273 (WTDP…PRMR) and 354–377 (QQEARGQDDRPWSSADPTASPKRQ). The segment covering 214–234 (TSNPTSRPSTSSTLPSHPSAS) has biased composition (low complexity). 2 stretches are compositionally biased toward basic and acidic residues: residues 243–253 (TGKEHGSLAED) and 355–364 (QEARGQDDRP).

This sequence belongs to the MDM12 family. As to quaternary structure, component of the ER-mitochondria encounter structure (ERMES) or MDM complex, composed of mmm1, mdm10, mdm12 and mdm34. A mmm1 homodimer associates with one molecule of mdm12 on each side in a pairwise head-to-tail manner, and the SMP-LTD domains of mmm1 and mdm12 generate a continuous hydrophobic tunnel for phospholipid trafficking.

Its subcellular location is the mitochondrion outer membrane. It is found in the endoplasmic reticulum membrane. In terms of biological role, component of the ERMES/MDM complex, which serves as a molecular tether to connect the endoplasmic reticulum (ER) and mitochondria. Components of this complex are involved in the control of mitochondrial shape and protein biogenesis, and function in nonvesicular lipid trafficking between the ER and mitochondria. Mdm12 is required for the interaction of the ER-resident membrane protein MMM1 and the outer mitochondrial membrane-resident beta-barrel protein mdm10. The mdm12-mmm1 subcomplex functions in the major beta-barrel assembly pathway that is responsible for biogenesis of all mitochondrial outer membrane beta-barrel proteins, and acts in a late step after the SAM complex. The mdm10-mdm12-mmm1 subcomplex further acts in the TOM40-specific pathway after the action of the mdm12-mmm1 complex. Essential for establishing and maintaining the structure of mitochondria and maintenance of mtDNA nucleoids. This is Mitochondrial distribution and morphology protein 12 from Aspergillus flavus (strain ATCC 200026 / FGSC A1120 / IAM 13836 / NRRL 3357 / JCM 12722 / SRRC 167).